The following is a 139-amino-acid chain: Ribulose bisphosphate carboxylase small subunit, chromosomal (139 aa).

Belongs to the RuBisCO small chain family. In terms of assembly, heterohexadecamer of 8 large and 8 small subunits.

Functionally, ruBisCO catalyzes two reactions: the carboxylation of D-ribulose 1,5-bisphosphate, the primary event in carbon dioxide fixation, as well as the oxidative fragmentation of the pentose substrate. Both reactions occur simultaneously and in competition at the same active site. Although the small subunit is not catalytic it is essential for maximal activity. The sequence is that of Ribulose bisphosphate carboxylase small subunit, chromosomal from Cupriavidus necator (Alcaligenes eutrophus).